The primary structure comprises 453 residues: Glutamyl-tRNA reductase (453 aa).

Substrate-binding positions include 50–53 (TCNR), S110, 115–117 (EPQ), and Q121. Residue C51 is the Nucleophile of the active site. 190–195 (GAGEMA) contacts NADP(+). Residues 423–436 (REKVPTDAHADRKP) show a composition bias toward basic and acidic residues. Residues 423–453 (REKVPTDAHADRKPPNFAETSDDFDVTDASE) are disordered. Positions 442–453 (TSDDFDVTDASE) are enriched in acidic residues.

Belongs to the glutamyl-tRNA reductase family. In terms of assembly, homodimer.

The enzyme catalyses (S)-4-amino-5-oxopentanoate + tRNA(Glu) + NADP(+) = L-glutamyl-tRNA(Glu) + NADPH + H(+). It participates in porphyrin-containing compound metabolism; protoporphyrin-IX biosynthesis; 5-aminolevulinate from L-glutamyl-tRNA(Glu): step 1/2. Catalyzes the NADPH-dependent reduction of glutamyl-tRNA(Glu) to glutamate 1-semialdehyde (GSA). The chain is Glutamyl-tRNA reductase from Solidesulfovibrio magneticus (strain ATCC 700980 / DSM 13731 / RS-1) (Desulfovibrio magneticus).